A 161-amino-acid chain; its full sequence is Anaerobic nitrite reductase Glb1-1 (161 aa).

In terms of domain architecture, Globin spans 8–157 (CFTEEQEALV…LVGAIKSEMK (150 aa)). Positions 41–45 (EIAPS) match the Homodimerization motif. Residues Ser51, Lys65, His69, Lys99, Thr103, and His104 each coordinate heme b. The Homodimerization signature appears at 111–123 (NEHFEVTKFALLD).

This sequence belongs to the plant globin family. Homodimer. The cofactor is heme b. In terms of tissue distribution, mainly expressed in root nodules, and, to a lower extent, in leaves, roots, stems, flowers and fruits. Accumulates in mature root nodules.

The enzyme catalyses Fe(III)-heme b-[protein] + nitric oxide + H2O = Fe(II)-heme b-[protein] + nitrite + 2 H(+). In terms of biological role, phytoglobin that reduces nitrite to nitric oxide (NO) under anoxic conditions (e.g. during flooding or in waterlogged soil) and upon root nodulation. Required for general plant development and during nodulation, especially for the onset of symbiosis. Monitors nitric oxide (NO) levels during early phase of the nitrogen-fixing symbiosis and buffers oxygen in functioning nodules. May not function as an oxygen storage or transport protein. Has an unusually high affinity for O(2) through a hexacoordinate heme iron because of a very low dissociation constant. This Lotus japonicus (Lotus corniculatus var. japonicus) protein is Anaerobic nitrite reductase Glb1-1.